A 374-amino-acid polypeptide reads, in one-letter code: F-box/LRR-repeat protein 8 (374 aa).

The F-box domain occupies 2-48 (AEPGEGLPEEVLALIFRHLSLRDRAAAARVCRAWAAAATCSAVWHDT).

Directly interacts with SKP1 and CUL1.

Functionally, substrate-recognition component of the SCF (SKP1-CUL1-F-box protein)-type E3 ubiquitin ligase complex. This chain is F-box/LRR-repeat protein 8 (FBXL8), found in Homo sapiens (Human).